A 452-amino-acid chain; its full sequence is Phosphoglucosamine mutase (452 aa).

S108 (phosphoserine intermediate) is an active-site residue. S108, D247, D249, and D251 together coordinate Mg(2+). The residue at position 108 (S108) is a Phosphoserine.

This sequence belongs to the phosphohexose mutase family. Mg(2+) is required as a cofactor. In terms of processing, activated by phosphorylation.

The enzyme catalyses alpha-D-glucosamine 1-phosphate = D-glucosamine 6-phosphate. Its function is as follows. Catalyzes the conversion of glucosamine-6-phosphate to glucosamine-1-phosphate. The chain is Phosphoglucosamine mutase from Paraburkholderia phymatum (strain DSM 17167 / CIP 108236 / LMG 21445 / STM815) (Burkholderia phymatum).